The sequence spans 198 residues: MEKFNTHTGVAAPLNRSNVDTDQIIPAVYLKRVTRTGFEDGLFAGWRKDPEFILNQEPYKNASVLVAGPDFGTGSSREHAVWALMDYGFRVVLSSRFADIFRGNSGKAGLLAAQMEQSDIELIWKLLEQQPGAEITVNLEDRTVTLGTHTFGFDVDDYTRWRLMEGLDDIGLTLRNEEAIEAFESQRASFKPRTIPAS.

The protein belongs to the LeuD family. LeuD type 1 subfamily. Heterodimer of LeuC and LeuD.

The catalysed reaction is (2R,3S)-3-isopropylmalate = (2S)-2-isopropylmalate. Its pathway is amino-acid biosynthesis; L-leucine biosynthesis; L-leucine from 3-methyl-2-oxobutanoate: step 2/4. In terms of biological role, catalyzes the isomerization between 2-isopropylmalate and 3-isopropylmalate, via the formation of 2-isopropylmaleate. This chain is 3-isopropylmalate dehydratase small subunit, found in Corynebacterium jeikeium (strain K411).